A 155-amino-acid polypeptide reads, in one-letter code: Snaclec bothrojaracin subunit alpha (155 aa).

A signal peptide spans 1-23 (MGRFLFVSFGLLVVFLSLSGTAA). Disulfide bonds link Cys25–Cys36, Cys53–Cys150, and Cys125–Cys142. The 120-residue stretch at 32-151 (HEGHCYKFFQ…CGQQNPFVCK (120 aa)) folds into the C-type lectin domain.

It belongs to the snaclec family. In terms of assembly, heterodimer of subunits alpha and beta; disulfide-linked. Expressed by the venom gland.

It is found in the secreted. Its function is as follows. This potent antithrombotic agent acts in a calcium-independent manner. Exerts its anticoagulant effect by two distinct mechanisms. It binds to activated thrombin through exosite 1, blocking fibrinogen clotting, platelet activation, factor V activation and other effects, and it interacts with prothrombin (F2), decreasing its proteolytic activation -especially in the presence of factor Va. In vivo, intravenous injection before thrombosis induction causes a significant decrease in thrombus weight. Furthermore, BJC shows a prolonged effect by remaining in the plasma bound to prothrombin for at least 12 hours. The chain is Snaclec bothrojaracin subunit alpha from Bothrops jararaca (Jararaca).